Here is a 274-residue protein sequence, read N- to C-terminus: Undecaprenyl-diphosphatase (274 aa).

The next 7 membrane-spanning stretches (helical) occupy residues 21–39, 44–64, 85–105, 109–129, 185–205, 214–234, and 247–267; these read FLPI…LLGF, AQVF…LVYW, FNLA…GKAI, LFTP…ILWA, ATDF…VYSL, VADL…AWLC, and FVPF…TAST.

It belongs to the UppP family.

It is found in the cell inner membrane. It carries out the reaction di-trans,octa-cis-undecaprenyl diphosphate + H2O = di-trans,octa-cis-undecaprenyl phosphate + phosphate + H(+). Functionally, catalyzes the dephosphorylation of undecaprenyl diphosphate (UPP). Confers resistance to bacitracin. The polypeptide is Undecaprenyl-diphosphatase (Verminephrobacter eiseniae (strain EF01-2)).